The sequence spans 290 residues: UPF0046 protein K07C11.7 (290 aa).

Residues 1–22 (MFHFSIGTVLISICWLAQWMEA) form the signal peptide. Residue Asn204 is glycosylated (N-linked (GlcNAc...) asparagine).

It belongs to the UPF0046 family.

This is UPF0046 protein K07C11.7 from Caenorhabditis elegans.